Reading from the N-terminus, the 312-residue chain is Atrochrysone carboxyl ACP thioesterase AacuM (312 aa).

Zn(2+)-binding residues include H103, H105, D107, and H108. D107 functions as the Proton donor/acceptor in the catalytic mechanism.

The protein belongs to the metallo-beta-lactamase superfamily. Zn(2+) serves as cofactor.

The enzyme catalyses atrochrysone carboxyl-[ACP] + H2O = atrochrysone carboxylate + holo-[ACP] + H(+). It participates in secondary metabolite biosynthesis. Atrochrysone carboxyl ACP thioesterase; part of the gene cluster that mediates the biosynthesis of the tetrahydroxanthone dimer secalonic acid D. The pathway begins with the synthesis of atrochrysone thioester by the polyketide synthase AacuL. The atrochrysone carboxyl ACP thioesterase AacuM then breaks the thioester bond and releases the atrochrysone carboxylic acid from AacuL. Atrochrysone carboxylic acid is decarboxylated by the decarboxylase AacuI, and oxidized by the anthrone oxygenase AacuG to yield emodin. Emodin is then reduced to emodin hydroquinone by a yet unidentified oxidoreductase. A-ring reduction by the short chain dehydrogenase AacuN, dehydration by the scytalone dehydratase-like protein AacuK and probable spontaneous re-oxidation, results in overall deoxygenation to chrysophanol. Baeyer-Villiger oxidation by the Baeyer-Villiger monooxygenase (BVMO) AacuH then yields monodictyphenone. Monodictyphenone is transformed into compounds with the tetrahydroxanthone skeleton via methylesterification by the methyltransferase AacuQ, followed by the action of the flavin-dependent monooxygenase AacuC, the isomerase AacuP, and the short chain dehydrogenase/reductase AacuF or AacuD. AacuF and AacuD should accept the same compound as a substrate but perform the ketoreduction with a different stereoselectivity, thus yielding blennolides B and A, respectively. In the final step of the biosynthesis, the cytochrome P450 monooxygenase AacuE accepts blennolide B and/or blennolide A to conduct the dimerization reaction to furnish the tetrahydroxanthone dimers, secalonic acids D, B, and F. The protein is Atrochrysone carboxyl ACP thioesterase AacuM of Aspergillus aculeatus (strain ATCC 16872 / CBS 172.66 / WB 5094).